The chain runs to 418 residues: Histidinol dehydrogenase (418 aa).

Residues tyrosine 119, glutamine 180, and asparagine 203 each coordinate NAD(+). Residues threonine 226, glutamine 248, and histidine 251 each coordinate substrate. The Zn(2+) site is built by glutamine 248 and histidine 251. Residues glutamate 316 and histidine 317 each act as proton acceptor in the active site. 4 residues coordinate substrate: histidine 317, aspartate 350, glutamate 404, and histidine 409. Aspartate 350 serves as a coordination point for Zn(2+). A Zn(2+)-binding site is contributed by histidine 409.

The protein belongs to the histidinol dehydrogenase family. The cofactor is Zn(2+).

The enzyme catalyses L-histidinol + 2 NAD(+) + H2O = L-histidine + 2 NADH + 3 H(+). The protein operates within amino-acid biosynthesis; L-histidine biosynthesis; L-histidine from 5-phospho-alpha-D-ribose 1-diphosphate: step 9/9. Functionally, catalyzes the sequential NAD-dependent oxidations of L-histidinol to L-histidinaldehyde and then to L-histidine. The polypeptide is Histidinol dehydrogenase (Staphylococcus aureus (strain MSSA476)).